The chain runs to 1330 residues: ABC multidrug transporter mdr4 (1330 aa).

Asn3 is a glycosylation site (N-linked (GlcNAc...) asparagine). 6 helical membrane passes run 90 to 110 (VLLI…FPLL), 144 to 164 (VLYV…HSTC), 218 to 238 (KVGL…VAFI), 243 to 263 (IAGM…GGGH), 324 to 344 (HAAQ…LAFW), and 370 to 390 (IFVL…IHVF). Residues 94–392 (IGGLLFAICA…VAPFIHVFAS (299 aa)) form the ABC transmembrane type-1 1 domain. Residues 428–666 (IRFRDVHFKY…GGVYAEMVRL (239 aa)) enclose the ABC transporter 1 domain. 463 to 470 (GPSGGGKS) serves as a coordination point for ATP. N-linked (GlcNAc...) asparagine glycosylation occurs at Asn707. A disordered region spans residues 717–736 (VADTPSDSRDGSEEEARKKR). Basic and acidic residues predominate over residues 722 to 733 (SDSRDGSEEEAR). 6 helical membrane-spanning segments follow: residues 761–781 (LLGL…AIVF), 806–826 (LLFF…GCAF), 871–893 (ASAL…VNLI), 903–923 (AWKI…SGMM), 989–1009 (AWLA…YWWG), and 1023–1043 (FFIV…MFAL). One can recognise an ABC transmembrane type-1 2 domain in the interval 761–1049 (LLGLAMSVII…MFALAPDISK (289 aa)). The ABC transporter 2 domain maps to 1086–1325 (AQLRDVHFTY…SETYRTSVIH (240 aa)). 1121-1128 (GPSGSGKS) contributes to the ATP binding site.

It belongs to the ABC transporter superfamily. ABCB family. Multidrug resistance exporter (TC 3.A.1.201) subfamily.

The protein localises to the cell membrane. It catalyses the reaction itraconazole(in) + ATP + H2O = itraconazole(out) + ADP + phosphate + H(+). The enzyme catalyses voriconazole(in) + ATP + H2O = voriconazole(out) + ADP + phosphate + H(+). Pleiotropic ABC efflux transporter that confers resistance to azoles such as itraconazole and voriconazole. In Aspergillus fumigatus (strain ATCC MYA-4609 / CBS 101355 / FGSC A1100 / Af293) (Neosartorya fumigata), this protein is ABC multidrug transporter mdr4.